Here is a 232-residue protein sequence, read N- to C-terminus: Cytochrome c oxidase subunit 2 (232 aa).

Topologically, residues 1-30 (MNNFFQDFNLLFSSSLFSSYMDWFYNFNCS) are mitochondrial intermembrane. Residues 31–52 (LLFGVLSFVSTMFVYLLLSSFY) traverse the membrane as a helical segment. The Mitochondrial matrix segment spans residues 53–69 (FKSKKIEYQFGELLCSV). The chain crosses the membrane as a helical span at residues 70–89 (FPTLILVMQMVPSLSLLYYY). The Mitochondrial intermembrane segment spans residues 90-232 (GLMNLDSSLT…KSWCVGLLSD (143 aa)). 6 residues coordinate Cu cation: histidine 164, cysteine 199, glutamate 201, cysteine 203, histidine 207, and methionine 210. Residue glutamate 201 coordinates Mg(2+).

Belongs to the cytochrome c oxidase subunit 2 family. In terms of assembly, component of the cytochrome c oxidase (complex IV, CIV), a multisubunit enzyme composed of a catalytic core of 3 subunits and several supernumerary subunits. The complex exists as a monomer or a dimer and forms supercomplexes (SCs) in the inner mitochondrial membrane with ubiquinol-cytochrome c oxidoreductase (cytochrome b-c1 complex, complex III, CIII). The cofactor is Cu cation.

Its subcellular location is the mitochondrion inner membrane. The catalysed reaction is 4 Fe(II)-[cytochrome c] + O2 + 8 H(+)(in) = 4 Fe(III)-[cytochrome c] + 2 H2O + 4 H(+)(out). Its function is as follows. Component of the cytochrome c oxidase, the last enzyme in the mitochondrial electron transport chain which drives oxidative phosphorylation. The respiratory chain contains 3 multisubunit complexes succinate dehydrogenase (complex II, CII), ubiquinol-cytochrome c oxidoreductase (cytochrome b-c1 complex, complex III, CIII) and cytochrome c oxidase (complex IV, CIV), that cooperate to transfer electrons derived from NADH and succinate to molecular oxygen, creating an electrochemical gradient over the inner membrane that drives transmembrane transport and the ATP synthase. Cytochrome c oxidase is the component of the respiratory chain that catalyzes the reduction of oxygen to water. Electrons originating from reduced cytochrome c in the intermembrane space (IMS) are transferred via the dinuclear copper A center (CU(A)) of subunit 2 and heme A of subunit 1 to the active site in subunit 1, a binuclear center (BNC) formed by heme A3 and copper B (CU(B)). The BNC reduces molecular oxygen to 2 water molecules using 4 electrons from cytochrome c in the IMS and 4 protons from the mitochondrial matrix. The chain is Cytochrome c oxidase subunit 2 (COII) from Ascaris suum (Pig roundworm).